Reading from the N-terminus, the 202-residue chain is Adenylyl-sulfate kinase (202 aa).

35-42 lines the ATP pocket; sequence GLSGSGKS. The active-site Phosphoserine intermediate is the serine 109.

This sequence belongs to the APS kinase family.

The catalysed reaction is adenosine 5'-phosphosulfate + ATP = 3'-phosphoadenylyl sulfate + ADP + H(+). The protein operates within sulfur metabolism; hydrogen sulfide biosynthesis; sulfite from sulfate: step 2/3. In terms of biological role, catalyzes the synthesis of activated sulfate. This chain is Adenylyl-sulfate kinase, found in Bacteroides fragilis (strain ATCC 25285 / DSM 2151 / CCUG 4856 / JCM 11019 / LMG 10263 / NCTC 9343 / Onslow / VPI 2553 / EN-2).